Reading from the N-terminus, the 542-residue chain is Chaperonin GroEL 1 (542 aa).

Residues 29-32 (TIGP), 86-90 (DGTTT), Gly-414, 479-481 (DAL), and Asp-495 contribute to the ATP site.

This sequence belongs to the chaperonin (HSP60) family. As to quaternary structure, forms a cylinder of 14 subunits composed of two heptameric rings stacked back-to-back. Interacts with the co-chaperonin GroES.

It is found in the cytoplasm. The catalysed reaction is ATP + H2O + a folded polypeptide = ADP + phosphate + an unfolded polypeptide.. In terms of biological role, together with its co-chaperonin GroES, plays an essential role in assisting protein folding. The GroEL-GroES system forms a nano-cage that allows encapsulation of the non-native substrate proteins and provides a physical environment optimized to promote and accelerate protein folding. The chain is Chaperonin GroEL 1 from Synechococcus sp. (strain JA-3-3Ab) (Cyanobacteria bacterium Yellowstone A-Prime).